The primary structure comprises 114 residues: uncharacterized protein (114 aa).

A coiled-coil region spans residues 31–72 (EFEKLVSEQMKTMDKLLDLQSELDRCKQIEAELRHLERDARL).

This is an uncharacterized protein from Bacillus subtilis (strain 168).